We begin with the raw amino-acid sequence, 286 residues long: Cytochrome c oxidase subunit 3 (286 aa).

The next 8 helical transmembrane spans lie at 13 to 33, 40 to 60, 85 to 105, 133 to 153, 173 to 195, 199 to 221, 223 to 243, and 253 to 273; these read GVFL…GVVI, VGTF…CFLI, IIQY…VVFF, IILD…NIIL, LCRE…LLFI, VWEF…LFSI, TLHF…IFNI, and IVLI…WFFL.

It belongs to the cytochrome c oxidase subunit 3 family. Component of the cytochrome c oxidase (complex IV, CIV), a multisubunit enzyme composed of a catalytic core of 3 subunits and several supernumerary subunits. The complex exists as a monomer or a dimer and forms supercomplexes (SCs) in the inner mitochondrial membrane with ubiquinol-cytochrome c oxidoreductase (cytochrome b-c1 complex, complex III, CIII).

The protein localises to the mitochondrion inner membrane. It carries out the reaction 4 Fe(II)-[cytochrome c] + O2 + 8 H(+)(in) = 4 Fe(III)-[cytochrome c] + 2 H2O + 4 H(+)(out). Functionally, component of the cytochrome c oxidase, the last enzyme in the mitochondrial electron transport chain which drives oxidative phosphorylation. The respiratory chain contains 3 multisubunit complexes succinate dehydrogenase (complex II, CII), ubiquinol-cytochrome c oxidoreductase (cytochrome b-c1 complex, complex III, CIII) and cytochrome c oxidase (complex IV, CIV), that cooperate to transfer electrons derived from NADH and succinate to molecular oxygen, creating an electrochemical gradient over the inner membrane that drives transmembrane transport and the ATP synthase. Cytochrome c oxidase is the component of the respiratory chain that catalyzes the reduction of oxygen to water. Electrons originating from reduced cytochrome c in the intermembrane space (IMS) are transferred via the dinuclear copper A center (CU(A)) of subunit 2 and heme A of subunit 1 to the active site in subunit 1, a binuclear center (BNC) formed by heme A3 and copper B (CU(B)). The BNC reduces molecular oxygen to 2 water molecules using 4 electrons from cytochrome c in the IMS and 4 protons from the mitochondrial matrix. The polypeptide is Cytochrome c oxidase subunit 3 (COIII) (Trypanoplasma borreli).